The following is a 117-amino-acid chain: MKLCAVIIASLLVCVAVASSSDNQKEFAQEKEMTREETQSLGEHEKDDEVTGSEERSCIEEWKTCENDCECCGMSTLCAASWVDGHEIKLCRNEGGKLKKVLHFIQKSVSKIRSCKK.

Positions 1–20 (MKLCAVIIASLLVCVAVASS) are cleaved as a signal peptide. Positions 20–55 (SSDNQKEFAQEKEMTREETQSLGEHEKDDEVTGSEE) are disordered. Residues 21–56 (SDNQKEFAQEKEMTREETQSLGEHEKDDEVTGSEER) constitute a propeptide that is removed on maturation. Residues 23-55 (NQKEFAQEKEMTREETQSLGEHEKDDEVTGSEE) show a composition bias toward basic and acidic residues. 4 disulfide bridges follow: Cys-58–Cys-72, Cys-65–Cys-78, Cys-69–Cys-115, and Cys-71–Cys-91.

This sequence belongs to the neurotoxin 03 (Tx2) family. 02 subfamily. HNTX-XV sub-subfamily. Expressed by the venom gland.

The protein resides in the secreted. In terms of biological role, putative ion channel inhibitor. The chain is Hainantoxin-XV-3 from Cyriopagopus hainanus (Chinese bird spider).